The chain runs to 188 residues: Adenine phosphoribosyltransferase (188 aa).

This sequence belongs to the purine/pyrimidine phosphoribosyltransferase family. As to quaternary structure, homodimer.

It localises to the cytoplasm. The catalysed reaction is AMP + diphosphate = 5-phospho-alpha-D-ribose 1-diphosphate + adenine. It functions in the pathway purine metabolism; AMP biosynthesis via salvage pathway; AMP from adenine: step 1/1. In terms of biological role, catalyzes a salvage reaction resulting in the formation of AMP, that is energically less costly than de novo synthesis. The chain is Adenine phosphoribosyltransferase from Paraburkholderia phytofirmans (strain DSM 17436 / LMG 22146 / PsJN) (Burkholderia phytofirmans).